A 312-amino-acid polypeptide reads, in one-letter code: GDSL esterase/lipase At2g38180 (312 aa).

The signal sequence occupies residues 1–22; sequence MVGPVRPQIVLFGSSIVQYSFT. A glycan (N-linked (GlcNAc...) asparagine) is linked at N79. The disordered stretch occupies residues 285–312; it reads EPPHPVSLCDHELTQNEQLEPPQPTARL.

The protein belongs to the 'GDSL' lipolytic enzyme family.

It localises to the secreted. This is GDSL esterase/lipase At2g38180 from Arabidopsis thaliana (Mouse-ear cress).